The sequence spans 344 residues: L-rhamnose-proton symporter (344 aa).

A run of 10 helical transmembrane segments spans residues A4–A24, W38–L58, F68–I88, M101–I121, T137–L157, L175–A195, L214–I234, V259–G279, I290–L310, and V323–A343.

It belongs to the L-rhamnose transporter (TC 2.A.7.6) family.

It localises to the cell inner membrane. It carries out the reaction L-rhamnopyranose(in) + H(+)(in) = L-rhamnopyranose(out) + H(+)(out). Uptake of L-rhamnose across the cytoplasmic membrane with the concomitant transport of protons into the cell (symport system). The sequence is that of L-rhamnose-proton symporter from Shigella flexneri.